A 244-amino-acid chain; its full sequence is Flavin-dependent thymidylate synthase (244 aa).

The 223-residue stretch at 17–239 (ITVELVKHSA…PETHAAFEKQ (223 aa)) folds into the ThyX domain. FAD contacts are provided by residues serine 68, 91–93 (RHR), and glutamate 99. DUMP-binding positions include 88–91 (EFMR), 99–103 (EESGR), and arginine 171. Residues 91-101 (RHRIASYNEES) carry the ThyX motif motif. FAD is bound by residues 187-189 (NAR) and asparagine 193. Arginine 198 provides a ligand contact to dUMP. The Involved in ionization of N3 of dUMP, leading to its activation role is filled by arginine 198.

This sequence belongs to the thymidylate synthase ThyX family. Homotetramer. FAD serves as cofactor.

The enzyme catalyses dUMP + (6R)-5,10-methylene-5,6,7,8-tetrahydrofolate + NADPH + H(+) = dTMP + (6S)-5,6,7,8-tetrahydrofolate + NADP(+). Its pathway is pyrimidine metabolism; dTTP biosynthesis. Functionally, catalyzes the reductive methylation of 2'-deoxyuridine-5'-monophosphate (dUMP) to 2'-deoxythymidine-5'-monophosphate (dTMP) while utilizing 5,10-methylenetetrahydrofolate (mTHF) as the methyl donor, and NADPH and FADH(2) as the reductant. In Tropheryma whipplei (strain Twist) (Whipple's bacillus), this protein is Flavin-dependent thymidylate synthase.